Consider the following 525-residue polypeptide: WD repeat-containing protein JIP5 (525 aa).

WD repeat units lie at residues 28-69, 121-160, 211-251, 270-310, and 358-398; these read VFDE…RILN, RHKG…VMKK, HNGD…ESDA, QEDE…LVDQ, and RKHS…DDEE. A disordered region spans residues 396–525; that stretch reads DEEGKINESY…EHGIRKFEGL (130 aa). Residues 410–424 are compositionally biased toward acidic residues; sequence SDNDNGFDSDADSNS. The span at 425-435 shows a compositional bias: low complexity; sequence DSESVSSSDVD. The segment covering 463 to 484 has biased composition (basic and acidic residues); that stretch reads SKDELLAELEKDLQSSDEDSKH. A compositionally biased stretch (basic residues) spans 485 to 501; it reads YTKRTKSTQPKKLKKQK. A compositionally biased stretch (basic and acidic residues) spans 513–525; that stretch reads QKHEHGIRKFEGL.

Belongs to the WD repeat WDR55 family.

The protein localises to the nucleus. The protein resides in the nucleolus. The chain is WD repeat-containing protein JIP5 (JIP5) from Kluyveromyces lactis (strain ATCC 8585 / CBS 2359 / DSM 70799 / NBRC 1267 / NRRL Y-1140 / WM37) (Yeast).